The primary structure comprises 180 residues: Large ribosomal subunit protein uL5 (180 aa).

It belongs to the universal ribosomal protein uL5 family. In terms of assembly, part of the 50S ribosomal subunit; part of the 5S rRNA/L5/L18/L25 subcomplex. Contacts the 5S rRNA and the P site tRNA. Forms a bridge to the 30S subunit in the 70S ribosome.

Its function is as follows. This is one of the proteins that bind and probably mediate the attachment of the 5S RNA into the large ribosomal subunit, where it forms part of the central protuberance. In the 70S ribosome it contacts protein S13 of the 30S subunit (bridge B1b), connecting the 2 subunits; this bridge is implicated in subunit movement. Contacts the P site tRNA; the 5S rRNA and some of its associated proteins might help stabilize positioning of ribosome-bound tRNAs. In Chlamydia abortus (strain DSM 27085 / S26/3) (Chlamydophila abortus), this protein is Large ribosomal subunit protein uL5.